Consider the following 215-residue polypeptide: MSCLAALTKFHEIYKAAFVERLGELPRCFTHGRPSPCLADDALAGSEEPQPWQMVPRREVAVFNNVSHAMDIELHHDIDDFYGHLFGGPLQFDSPWGEGELIQIWNEDDFVLLQQNILGHLMMKKQLKQPQTWFVGLIGDVDEMVSVNNADGTVWREVAGQEPHEQLAESLEAFLQQLKPRVAPPQYHQEPAATVNPHPGIFASLKRMWQNLTGR.

This sequence belongs to the Syd family.

Its subcellular location is the cell inner membrane. Its function is as follows. Interacts with the SecY protein in vivo. May bind preferentially to an uncomplexed state of SecY, thus functioning either as a chelating agent for excess SecY in the cell or as a regulatory factor that negatively controls the translocase function. The sequence is that of Protein Syd from Shewanella amazonensis (strain ATCC BAA-1098 / SB2B).